The chain runs to 97 residues: Protein RnfH (97 aa).

It belongs to the UPF0125 (RnfH) family.

The sequence is that of Protein RnfH from Proteus mirabilis (strain HI4320).